The chain runs to 225 residues: uncharacterized protein (225 aa).

The disordered stretch occupies residues 1–48 (MTQLVTRARSARGSTLGEQPRQDQLDFADHTGTAGDGNDGAAAASGPV). Residues 20-29 (PRQDQLDFAD) are compositionally biased toward basic and acidic residues. The HTH merR-type domain occupies 64–136 (GYRGPSACQI…LHNIRVAVDH (73 aa)). The tract at residues 201 to 225 (DGGESIAAPEDELASRRKHRDRKIG) is disordered. Residues 216–225 (RRKHRDRKIG) show a composition bias toward basic residues.

This is an uncharacterized protein from Mycobacterium tuberculosis (strain CDC 1551 / Oshkosh).